The following is a 206-amino-acid chain: Urease accessory protein UreG (206 aa).

15 to 22 contributes to the GTP binding site; the sequence is GPVGSGKT.

Belongs to the SIMIBI class G3E GTPase family. UreG subfamily. As to quaternary structure, homodimer. UreD, UreF and UreG form a complex that acts as a GTP-hydrolysis-dependent molecular chaperone, activating the urease apoprotein by helping to assemble the nickel containing metallocenter of UreC. The UreE protein probably delivers the nickel.

Its subcellular location is the cytoplasm. Functionally, facilitates the functional incorporation of the urease nickel metallocenter. This process requires GTP hydrolysis, probably effectuated by UreG. This is Urease accessory protein UreG from Ralstonia pickettii (strain 12J).